The chain runs to 544 residues: Methionine--tRNA ligase (544 aa).

Positions 10–20 match the 'HIGH' region motif; it reads PYANGSLHLGH. Cys-141, Cys-144, Cys-153, and Cys-156 together coordinate Zn(2+). The 'KMSKS' region signature appears at 329–333; that stretch reads KLSTS. Residue Thr-332 coordinates ATP.

The protein belongs to the class-I aminoacyl-tRNA synthetase family. MetG type 1 subfamily. Monomer. Zn(2+) is required as a cofactor.

The protein localises to the cytoplasm. It carries out the reaction tRNA(Met) + L-methionine + ATP = L-methionyl-tRNA(Met) + AMP + diphosphate. Its function is as follows. Is required not only for elongation of protein synthesis but also for the initiation of all mRNA translation through initiator tRNA(fMet) aminoacylation. This chain is Methionine--tRNA ligase, found in Bacillus mycoides (strain KBAB4) (Bacillus weihenstephanensis).